The following is a 207-amino-acid chain: Ion-translocating oxidoreductase complex subunit B (207 aa).

Residues 1 to 29 (MLDLSIIAYLLIAICLIALIFGALLGYFS) are hydrophobic. The 4Fe-4S domain maps to 35 to 93 (EADPIVDQIDAILPQSQCGQCGYPGCKPYAEAIANGDQITKCVPGGQPLVVKIAELMGV). Residues cysteine 52, cysteine 55, cysteine 60, cysteine 76, cysteine 116, cysteine 119, cysteine 122, cysteine 126, cysteine 146, cysteine 149, cysteine 152, and cysteine 156 each contribute to the [4Fe-4S] cluster site. 4Fe-4S ferredoxin-type domains lie at 107–136 (KVAL…GTNK) and 137–166 (AMHT…MIKV).

It belongs to the 4Fe4S bacterial-type ferredoxin family. RnfB subfamily. As to quaternary structure, the complex is composed of six subunits: RnfA, RnfB, RnfC, RnfD, RnfE and RnfG. Requires [4Fe-4S] cluster as cofactor.

It is found in the cell inner membrane. Functionally, part of a membrane-bound complex that couples electron transfer with translocation of ions across the membrane. This chain is Ion-translocating oxidoreductase complex subunit B, found in Haemophilus ducreyi (strain 35000HP / ATCC 700724).